A 431-amino-acid polypeptide reads, in one-letter code: Enolase (431 aa).

Residue glutamine 167 participates in (2R)-2-phosphoglycerate binding. The active-site Proton donor is the glutamate 209. Positions 246, 289, and 316 each coordinate Mg(2+). Lysine 341, arginine 370, serine 371, and lysine 392 together coordinate (2R)-2-phosphoglycerate. Lysine 341 (proton acceptor) is an active-site residue.

The protein belongs to the enolase family. As to quaternary structure, component of the RNA degradosome, a multiprotein complex involved in RNA processing and mRNA degradation. Requires Mg(2+) as cofactor.

The protein resides in the cytoplasm. It localises to the secreted. Its subcellular location is the cell surface. It carries out the reaction (2R)-2-phosphoglycerate = phosphoenolpyruvate + H2O. The protein operates within carbohydrate degradation; glycolysis; pyruvate from D-glyceraldehyde 3-phosphate: step 4/5. In terms of biological role, catalyzes the reversible conversion of 2-phosphoglycerate (2-PG) into phosphoenolpyruvate (PEP). It is essential for the degradation of carbohydrates via glycolysis. This is Enolase from Shewanella baltica (strain OS155 / ATCC BAA-1091).